Consider the following 391-residue polypeptide: Ferrochelatase (391 aa).

Positions 196 and 281 each coordinate Fe cation.

It belongs to the ferrochelatase family.

The protein resides in the cytoplasm. The enzyme catalyses heme b + 2 H(+) = protoporphyrin IX + Fe(2+). The protein operates within porphyrin-containing compound metabolism; protoheme biosynthesis; protoheme from protoporphyrin-IX: step 1/1. In terms of biological role, catalyzes the ferrous insertion into protoporphyrin IX. The sequence is that of Ferrochelatase from Prochlorococcus marinus (strain MIT 9211).